The primary structure comprises 764 residues: Thyrotropin receptor (764 aa).

The signal sequence occupies residues 1 to 21 (MRPTPLLRLALLLVLPSSLWG). At 22 to 413 (ERCPSPPCEC…EFNPCEDIMG (392 aa)) the chain is on the extracellular side. A disulfide bridge connects residues cysteine 31 and cysteine 41. The stretch at 51 to 74 (PPSTQTLKFIETHLKTIPSRAFSN) is one LRR 1 repeat. 2 N-linked (GlcNAc...) asparagine glycosylation sites follow: asparagine 77 and asparagine 99. LRR repeat units follow at residues 125-150 (LPLL…IYST), 152-174 (VFFI…AFQG), 176-199 (SNET…AFNG), 201-223 (KLDA…AFAG), and 225-248 (YSGP…GLEH). N-linked (GlcNAc...) asparagine glycans are attached at residues asparagine 177 and asparagine 198. Asparagine 302 carries N-linked (GlcNAc...) asparagine glycosylation. Tyrosine 385 is modified (sulfotyrosine). The chain crosses the membrane as a helical span at residues 414–441 (YKFLRIVVWFVSLLALLGNVFVLVILLT). The Cytoplasmic segment spans residues 442–450 (SHYKLTVPR). A helical transmembrane segment spans residues 451–473 (FLMCNLAFADFCMGLYLLLIASV). Topologically, residues 474-494 (DLYTQSEYYNHAIDWQTGPGC) are extracellular. Cysteine 494 and cysteine 569 are joined by a disulfide. Residues 495–517 (NTAGFFTVFASELSVYTLTVITL) form a helical membrane-spanning segment. The Cytoplasmic segment spans residues 518–537 (ERWYAITFAMHLDRKIRLWH). The chain crosses the membrane as a helical span at residues 538–560 (AYVIMLGGWVCCFLLALLPLVGI). Over 561–580 (SSYAKVSICLPMDTETPLAL) the chain is Extracellular. A helical membrane pass occupies residues 581–602 (AYIILVLLLNIIAFIIVCACYV). Residues 603–625 (KIYITVRNPHYNPGDKDTRIAKR) are Cytoplasmic-facing. The helical transmembrane segment at 626 to 649 (MAVLIFTDFMCMAPISFYALSALM) threads the bilayer. Residues 650 to 660 (NKPLITVTNSK) lie on the Extracellular side of the membrane. A helical membrane pass occupies residues 661–682 (ILLVLFYPLNSCANPFLYAIFT). The Cytoplasmic segment spans residues 683 to 764 (KAFQRDVFML…TSKEYKQTVL (82 aa)). The short motif at 762–764 (TVL) is the PDZ-binding element.

It belongs to the G-protein coupled receptor 1 family. FSH/LSH/TSH subfamily. Interacts with heterodimer GPHA2:GPHB5; this interaction stimulates cAMP production. Interacts (via the PDZ-binding motif) with SCRIB; regulates TSHR trafficking and function. Glycosylated. Post-translationally, sulfated. Sulfation on Tyr-385 plays a role in thyrotropin receptor binding and activation.

The protein resides in the cell membrane. It is found in the basolateral cell membrane. Receptor for the thyroid-stimulating hormone (TSH) or thyrotropin. Also acts as a receptor for the heterodimeric glycoprotein hormone (GPHA2:GPHB5) or thyrostimulin. The activity of this receptor is mediated by G proteins which activate adenylate cyclase. Plays a central role in controlling thyroid cell metabolism. This is Thyrotropin receptor (TSHR) from Ovis aries (Sheep).